A 110-amino-acid chain; its full sequence is Nucleoid-associated protein KPK_4227 (110 aa).

The disordered stretch occupies residues 1–22 (MFGGKGGLGNLMKQAQQMQDKM).

The protein belongs to the YbaB/EbfC family. Homodimer.

The protein localises to the cytoplasm. It localises to the nucleoid. Binds to DNA and alters its conformation. May be involved in regulation of gene expression, nucleoid organization and DNA protection. This chain is Nucleoid-associated protein KPK_4227, found in Klebsiella pneumoniae (strain 342).